The following is a 98-amino-acid chain: Acylphosphatase (98 aa).

Residues 12-98 (RLSAWVHGHV…DATMTGFSER (87 aa)) form the Acylphosphatase-like domain. Active-site residues include Arg27 and Asn45.

The protein belongs to the acylphosphatase family.

It catalyses the reaction an acyl phosphate + H2O = a carboxylate + phosphate + H(+). In Mycolicibacterium smegmatis (strain ATCC 700084 / mc(2)155) (Mycobacterium smegmatis), this protein is Acylphosphatase (acyP).